The primary structure comprises 284 residues: Pantothenate synthetase (284 aa).

30–37 contacts ATP; that stretch reads MGNLHEGH. The active-site Proton donor is the His37. Gln61 contacts (R)-pantoate. Gln61 contacts beta-alanine. Residue 149-152 coordinates ATP; sequence GEKD. Residue Gln155 participates in (R)-pantoate binding. ATP is bound by residues Val178 and 186–189; that span reads LSSR.

Belongs to the pantothenate synthetase family. Homodimer.

The protein resides in the cytoplasm. The enzyme catalyses (R)-pantoate + beta-alanine + ATP = (R)-pantothenate + AMP + diphosphate + H(+). It participates in cofactor biosynthesis; (R)-pantothenate biosynthesis; (R)-pantothenate from (R)-pantoate and beta-alanine: step 1/1. Functionally, catalyzes the condensation of pantoate with beta-alanine in an ATP-dependent reaction via a pantoyl-adenylate intermediate. The polypeptide is Pantothenate synthetase (Yersinia enterocolitica serotype O:8 / biotype 1B (strain NCTC 13174 / 8081)).